Reading from the N-terminus, the 468-residue chain is Elongation factor 1-alpha (468 aa).

A tr-type G domain is found at 6 to 244 (KPHINIVVIG…DNIPLPARPS (239 aa)). The interval 15–22 (GHVDSGKS) is G1. Residue 15-22 (GHVDSGKS) participates in GTP binding. Positions 71–75 (GITID) are G2. Residues 92 to 95 (DAPG) form a G3 region. GTP-binding positions include 92–96 (DAPGH) and 154–157 (NKID). The segment at 154 to 157 (NKID) is G4. The tract at residues 195 to 197 (SGW) is G5. Residues glutamate 303 and glutamate 376 each carry the 5-glutamyl glycerylphosphorylethanolamine modification.

Belongs to the TRAFAC class translation factor GTPase superfamily. Classic translation factor GTPase family. EF-Tu/EF-1A subfamily.

The protein resides in the cytoplasm. Functionally, this protein promotes the GTP-dependent binding of aminoacyl-tRNA to the A-site of ribosomes during protein biosynthesis. The chain is Elongation factor 1-alpha from Hydra vulgaris (Hydra).